The following is a 460-amino-acid chain: tRNA-2-methylthio-N(6)-dimethylallyladenosine synthase (460 aa).

The MTTase N-terminal domain maps to 23-138 (RKVYVHTFGC…LPEMVARAER (116 aa)). [4Fe-4S] cluster-binding residues include C32, C68, C101, C176, C180, and C183. Residues 162 to 394 (ARGRPTAFVT…QAAQRRIAAA (233 aa)) form the Radical SAM core domain. In terms of domain architecture, TRAM spans 397-460 (AAELGKVVEV…GGSSLSGTPA (64 aa)).

Belongs to the methylthiotransferase family. MiaB subfamily. Monomer. It depends on [4Fe-4S] cluster as a cofactor.

The protein localises to the cytoplasm. The enzyme catalyses N(6)-dimethylallyladenosine(37) in tRNA + (sulfur carrier)-SH + AH2 + 2 S-adenosyl-L-methionine = 2-methylsulfanyl-N(6)-dimethylallyladenosine(37) in tRNA + (sulfur carrier)-H + 5'-deoxyadenosine + L-methionine + A + S-adenosyl-L-homocysteine + 2 H(+). Its function is as follows. Catalyzes the methylthiolation of N6-(dimethylallyl)adenosine (i(6)A), leading to the formation of 2-methylthio-N6-(dimethylallyl)adenosine (ms(2)i(6)A) at position 37 in tRNAs that read codons beginning with uridine. The sequence is that of tRNA-2-methylthio-N(6)-dimethylallyladenosine synthase from Anaeromyxobacter sp. (strain Fw109-5).